The following is a 206-amino-acid chain: Small ribosomal subunit protein uS4 (206 aa).

Residues 96–156 (GRLDNVVYRM…EKAKKQSRVK (61 aa)) enclose the S4 RNA-binding domain.

The protein belongs to the universal ribosomal protein uS4 family. In terms of assembly, part of the 30S ribosomal subunit. Contacts protein S5. The interaction surface between S4 and S5 is involved in control of translational fidelity.

Its function is as follows. One of the primary rRNA binding proteins, it binds directly to 16S rRNA where it nucleates assembly of the body of the 30S subunit. Functionally, with S5 and S12 plays an important role in translational accuracy. In Pectobacterium atrosepticum (strain SCRI 1043 / ATCC BAA-672) (Erwinia carotovora subsp. atroseptica), this protein is Small ribosomal subunit protein uS4.